Reading from the N-terminus, the 117-residue chain is UPF0295 protein GTNG_0491 (117 aa).

The next 2 helical transmembrane spans lie at 12 to 32 (IRTFALSLIFVGVIVMYLGLF) and 42 to 62 (LFMVLGLLFLVASGIVYFWIG).

This sequence belongs to the UPF0295 family.

The protein resides in the cell membrane. This is UPF0295 protein GTNG_0491 from Geobacillus thermodenitrificans (strain NG80-2).